The following is a 312-amino-acid chain: Taste receptor type 2 member 103 (312 aa).

The Extracellular portion of the chain corresponds to Met-1–Arg-6. Residues Ala-7–Gly-27 traverse the membrane as a helical segment. Over Asn-28 to Ala-61 the chain is Cytoplasmic. Residues Phe-62–Met-82 traverse the membrane as a helical segment. The Extracellular segment spans residues Arg-83–Ser-92. The helical transmembrane segment at Trp-93–Leu-113 threads the bilayer. Residues Lys-114 to Lys-132 lie on the Cytoplasmic side of the membrane. Residues Val-133–Asn-153 traverse the membrane as a helical segment. At Lys-154–Gly-185 the chain is on the extracellular side. Residue Asn-166 is glycosylated (N-linked (GlcNAc...) asparagine). A helical membrane pass occupies residues Phe-186 to Trp-206. Over Arg-207–Lys-229 the chain is Cytoplasmic. Residues Gly-230 to Ser-250 form a helical membrane-spanning segment. The Extracellular segment spans residues Glu-251–Ser-264. A helical membrane pass occupies residues His-265–Gly-285. Residues Asn-286–Pro-312 are Cytoplasmic-facing.

It belongs to the G-protein coupled receptor T2R family. Expressed in subsets of taste receptor cells of the tongue and palate epithelium and exclusively in gustducin-positive cells. Expressed in 15% taste bud cells in circumvallate and foliate papillae but only in 2% in fungiform papillae.

The protein localises to the membrane. Functionally, gustducin-coupled receptor implicated in the perception of bitter compounds in the oral cavity and the gastrointestinal tract. Signals through PLCB2 and the calcium-regulated cation channel TRPM5. The chain is Taste receptor type 2 member 103 (Tas2r103) from Mus musculus (Mouse).